The chain runs to 449 residues: Early 53 kDa protein (449 aa).

The interval Met1–His68 is disordered. Residues Asn31 to Lys42 show a composition bias toward pro residues. A C4-type zinc finger spans residues Cys379–Cys399.

It is found in the virion. The protein localises to the host cytoplasm. It localises to the host nucleus. Its subcellular location is the host cell membrane. May act as a packaging protein or as a structural component associated with intranuclear baculovirus virion assembly. This chain is Early 53 kDa protein (ME53), found in Autographa californica nuclear polyhedrosis virus (AcMNPV).